The following is a 429-amino-acid chain: O-methyltransferase phnC (429 aa).

Asp285 contacts S-adenosyl-L-methionine.

The protein belongs to the class I-like SAM-binding methyltransferase superfamily. Cation-independent O-methyltransferase family. COMT subfamily.

The enzyme catalyses (2'R)-atrovenetin + S-adenosyl-L-methionine = deoxyherqueinone + S-adenosyl-L-homocysteine + H(+). Its pathway is secondary metabolite biosynthesis. O-methyltransferase; part of the gene cluster that mediates the biosynthesis of phenalenones such as herqueinone, compounds that have been reported to treat tumors, bacterial infections and/or mycoses, and rheumatic diseases. The non-reducing polyketide synthase phnA synthesizes the heptaketide backbone and cyclizes it into the angular, hemiketal-containing naphtho-gamma-pyrone prephenalenone. The product template (PT) domain of phnA catalyzes only the C4-C9 aldol condensation, which is unprecedented among known PT domains. The transformation of prephenalenone to phenalenones requires an FAD-dependent monooxygenase phnB, which catalyzes the C2 aromatic hydroxylation of prephenalenone and ring opening of the gamma-pyrone ring simultaneously. Subsequent intramolecular deprotonation of C3 phenolic oxygen accelerates phenalenone ring closure to yield the tricyclic phenalenone core with a C2 hydroxylation. The prenyltransferase phnF further catalyzes reverse C-prenylation of phenalenone by direct electrophilic substitution at C6, or possibly via first a forward O-prenylation of a neighboring phenol in phenalenone, followed by a Claisen rearrangement. The hydroalkoxylation enzyme phnH catalyzes the 5-exo-trig cyclization via acid catalysis after the spontaneous deprotonation of 7-OH, which leads to the formation of the dihydrobenzofuran atrovenetin. Atrovenetin is further converted to deoxyherqueinone by the O-methyltransferase phnC which can methylate C2-OH to stabilize the northern portion of the phenalenone core. Finally, the oxidoreductase phnG converts deoxyherqueinone to herqueinone via C6 hydroxylation. In Penicillium herquei, this protein is O-methyltransferase phnC.